Reading from the N-terminus, the 227-residue chain is PKHD-type hydroxylase BPSS1206 (227 aa).

Residues 78-178 (KVFPPLFNRY…RVASFFWIQS (101 aa)) form the Fe2OG dioxygenase domain. Residues His96, Asp98, and His159 each contribute to the Fe cation site. Arg169 is a binding site for 2-oxoglutarate.

Requires Fe(2+) as cofactor. It depends on L-ascorbate as a cofactor.

This chain is PKHD-type hydroxylase BPSS1206, found in Burkholderia pseudomallei (strain K96243).